A 308-amino-acid chain; its full sequence is MSQAVQTNGTQPLSKTWELSLYELQRTPQEAITDGLEIVVSPRSLHSELMCPICLDMLKNTMTTKECLHRFCADCIITALRSGNKECPTCRKKLVSKRSLRPDPNFDALISKIYPSRDEYEAHQERVLARINKHNNQQALSHSIEEGLKIQAMNRLQRGKKQQIENGSGAEDNGDSSHCSNASTHSNQEAGPSNKRTKTSDDSGLELDNNNAAVAIDPVMDGASEIELVFRPHPTLMEKDDSAQTRYIKTSGNATVDHLSKYLAVRLALEELRSKGESNQMNLDTASEKQYTIYIATASGQFTVSICQ.

Ser-2 is subject to N-acetylserine. Residues 2–179 (SQAVQTNGTQ…AEDNGDSSHC (178 aa)) form an interaction with HIP2 region. At Ser-41 the chain carries Phosphoserine. The RING-type zinc-finger motif lies at 51–91 (CPICLDMLKNTMTTKECLHRFCADCIITALRSGNKECPTCR). The interval 93-98 (KLVSKR) is interaction with nucleosomes via an acidic patch on histone H2A and histone H2B. Lys-112 is covalently cross-linked (Glycyl lysine isopeptide (Lys-Gly) (interchain with G-Cter in ubiquitin)). Residues Ser-143 and Ser-168 each carry the phosphoserine modification. Positions 157–206 (QRGKKQQIENGSGAEDNGDSSHCSNASTHSNQEAGPSNKRTKTSDDSGLE) are disordered. Positions 176–191 (SSHCSNASTHSNQEAG) are enriched in polar residues. Lys-249 is covalently cross-linked (Glycyl lysine isopeptide (Lys-Gly) (interchain with G-Cter in SUMO2)).

Component of chromatin-associated Polycomb (PcG) complexes. Component of a number of PRC1-like complexes; these complexes contain either the polycomb group ring finger protein PCGF1, or PCGF2, or PCGF3, or BMI1, or PCGF5, or PCGF6. Distinct PRC1-like complexes are composed of a RING1 subunit (RING1B or RING1A), one of the six PCGF proteins (PCGF1, PCGF2, PCGF3, BMI1, PCGF5 or PCGF6), one PHC protein (PHC1, PHC2 or PHC3) and one of the CBX proteins (CBX2, CBX4, CBX6, CBX7 or CBX8). Part of a complex that contains RNF2, UB2D3 and BMI1; within that complex RNF2 and BMI1 form a tight heterodimer, where UB2D3 interacts only with RNF2. The complex composed of RNF2, UB2D3 and BMI1 binds nucleosomes, and has activity only with nucleosomal histone H2A. Part of a complex that contains PCGF5, RNF2 and UBE2D3. Part of a complex that contains AUTS2, PCGF5, RNF2, CSNK2B and RYBP. Interacts with CBX6 and CBX8. Interacts with PHC1, PCGF2, RYBP, CBX7, CBX4, CBX2, RNF1/RING1, BMI1 and PHC2. Interaction with RYBP and CBX7 is mutually exclusive; both compete for the same binding site on RNF2. Component of repressive BCOR complex containing a Polycomb group subcomplex at least composed of RYBP, PCGF1, BCOR and RING1. Interacts with CBX2 and PHC1. Interacts with CHTOP. Interacts with AURKB. Part of the E2F6.com-1 complex in G0 phase composed of E2F6, MGA, MAX, TFDP1, CBX3, BAT8, EUHMTASE1, RNF1/RING1, RNF2/RING2, MBLR, L3MBTL2 and YAF2. Component of some MLL1/MLL complex, at least composed of the core components KMT2A/MLL1, ASH2L, HCFC1/HCF1, WDR5 and RBBP5, as well as the facultative components BACC1, CHD8, E2F6, HSP70, INO80C, KANSL1, LAS1L, MAX, MCRS1, MGA, MYST1/MOF, PELP1, PHF20, PRP31, RING2, RUVB1/TIP49A, RUVB2/TIP49B, SENP3, TAF1, TAF4, TAF6, TAF7, TAF9 and TEX10. Interacts with RYBP, HIP2 and TFCP2. Interacts with NUPR1. Interacts with SAMD7 in a PHC2-dependent manner. Monoubiquitinated, by auto-ubiquitination. Polyubiquitinated in the presence of UBE2D3 (in vitro).

It is found in the nucleus. The protein localises to the cytoplasm. Its subcellular location is the chromosome. It carries out the reaction S-ubiquitinyl-[E2 ubiquitin-conjugating enzyme]-L-cysteine + [acceptor protein]-L-lysine = [E2 ubiquitin-conjugating enzyme]-L-cysteine + N(6)-ubiquitinyl-[acceptor protein]-L-lysine.. The protein operates within protein modification; protein ubiquitination. In terms of biological role, E3 ubiquitin-protein ligase that mediates monoubiquitination of 'Lys-119' of histone H2A (H2AK119Ub), thereby playing a central role in histone code and gene regulation. H2AK119Ub gives a specific tag for epigenetic transcriptional repression and participates in X chromosome inactivation of female mammals. May be involved in the initiation of both imprinted and random X inactivation. Essential component of a Polycomb group (PcG) multiprotein PRC1-like complex, a complex class required to maintain the transcriptionally repressive state of many genes, including Hox genes, throughout development. PcG PRC1 complex acts via chromatin remodeling and modification of histones, rendering chromatin heritably changed in its expressibility. E3 ubiquitin-protein ligase activity is enhanced by BMI1/PCGF4. Acts as the main E3 ubiquitin ligase on histone H2A of the PRC1 complex, while RING1 may rather act as a modulator of RNF2/RING2 activity. Plays a role in the transcriptional repression of genes that are required for pluripotency in embryonic stem cells, thereby contributing to differentiation of the ectodermal and endodermal germ layers. Association with the chromosomal DNA is cell-cycle dependent. In resting B- and T-lymphocytes, interaction with AURKB leads to block its activity, thereby maintaining transcription in resting lymphocytes. Also acts as a negative regulator of autophagy by mediating ubiquitination of AMBRA1, leading to its subsequent degradation. This is E3 ubiquitin-protein ligase RING2 (Rnf2) from Rattus norvegicus (Rat).